A 336-amino-acid polypeptide reads, in one-letter code: Phenylalanine--tRNA ligase alpha subunit (336 aa).

Glu259 is a Mg(2+) binding site.

The protein belongs to the class-II aminoacyl-tRNA synthetase family. Phe-tRNA synthetase alpha subunit type 1 subfamily. Tetramer of two alpha and two beta subunits. Mg(2+) is required as a cofactor.

The protein localises to the cytoplasm. It carries out the reaction tRNA(Phe) + L-phenylalanine + ATP = L-phenylalanyl-tRNA(Phe) + AMP + diphosphate + H(+). This Tropheryma whipplei (strain Twist) (Whipple's bacillus) protein is Phenylalanine--tRNA ligase alpha subunit.